A 294-amino-acid chain; its full sequence is Nucleotide-binding protein lp_0779 (294 aa).

12-19 (GMSGAGKT) contacts ATP. 62-65 (DLRS) provides a ligand contact to GTP.

Belongs to the RapZ-like family.

Its function is as follows. Displays ATPase and GTPase activities. The polypeptide is Nucleotide-binding protein lp_0779 (Lactiplantibacillus plantarum (strain ATCC BAA-793 / NCIMB 8826 / WCFS1) (Lactobacillus plantarum)).